The chain runs to 267 residues: Electron transfer flavoprotein subunit beta (267 aa).

The protein belongs to the ETF beta-subunit/FixA family. Heterodimer of an alpha and a beta subunit.

Its function is as follows. Participates in the electron transfer process during N,N-dimethylglycine (DMG) degradation to sarcosine. This Chromohalobacter salexigens (strain ATCC BAA-138 / DSM 3043 / CIP 106854 / NCIMB 13768 / 1H11) protein is Electron transfer flavoprotein subunit beta.